A 156-amino-acid chain; its full sequence is 6,7-dimethyl-8-ribityllumazine synthase (156 aa).

5-amino-6-(D-ribitylamino)uracil is bound by residues F23, A57–E59, and A81–I83. Position 86 to 87 (S86 to T87) interacts with (2S)-2-hydroxy-3-oxobutyl phosphate. The active-site Proton donor is H89. F114 provides a ligand contact to 5-amino-6-(D-ribitylamino)uracil. (2S)-2-hydroxy-3-oxobutyl phosphate is bound at residue R128.

It belongs to the DMRL synthase family.

It catalyses the reaction (2S)-2-hydroxy-3-oxobutyl phosphate + 5-amino-6-(D-ribitylamino)uracil = 6,7-dimethyl-8-(1-D-ribityl)lumazine + phosphate + 2 H2O + H(+). The protein operates within cofactor biosynthesis; riboflavin biosynthesis; riboflavin from 2-hydroxy-3-oxobutyl phosphate and 5-amino-6-(D-ribitylamino)uracil: step 1/2. Its function is as follows. Catalyzes the formation of 6,7-dimethyl-8-ribityllumazine by condensation of 5-amino-6-(D-ribitylamino)uracil with 3,4-dihydroxy-2-butanone 4-phosphate. This is the penultimate step in the biosynthesis of riboflavin. The protein is 6,7-dimethyl-8-ribityllumazine synthase of Wolinella succinogenes (strain ATCC 29543 / DSM 1740 / CCUG 13145 / JCM 31913 / LMG 7466 / NCTC 11488 / FDC 602W) (Vibrio succinogenes).